Here is a 149-residue protein sequence, read N- to C-terminus: Transcriptional regulator MraZ (149 aa).

SpoVT-AbrB domains are found at residues 7–54 (KYVN…GISH) and 83–126 (AVQL…QPQN).

The protein belongs to the MraZ family. In terms of assembly, forms oligomers.

The protein resides in the cytoplasm. It localises to the nucleoid. In Rickettsia rickettsii (strain Sheila Smith), this protein is Transcriptional regulator MraZ.